The sequence spans 101 residues: Small ribosomal subunit protein uS14m (101 aa).

Belongs to the universal ribosomal protein uS14 family. In terms of assembly, component of the mitochondrial ribosome small subunit (28S) which comprises a 12S rRNA and about 30 distinct proteins. Interacts with LIAT1.

It localises to the mitochondrion. The chain is Small ribosomal subunit protein uS14m (mrps14) from Dictyostelium citrinum (Slime mold).